The chain runs to 196 residues: UPF0319 protein VV0948 (196 aa).

An N-terminal signal peptide occupies residues 1-19 (MKKMMILSALALFSSSLFA).

Belongs to the UPF0319 family.

In Vibrio vulnificus (strain YJ016), this protein is UPF0319 protein VV0948.